A 316-amino-acid polypeptide reads, in one-letter code: MAPTDRNPVQVQYYAKGKKTTESSGPAPAPLILIHDGGGTTFAYFTIGRLERDVWAIHSPTFTSAQPWEGGMDGMAKHYIELIEKVAGIKGKILLGGWSLGGYVALTMAHMIASSPASFEISIDGILMMDSPWLVAGRDLPIGTPQPALIGIPDLVRKSLDNCERMLYHWELPQWGRSSGKAFKFSAGNEKFETQPGTVLYRSLKGDWRAVERTVSHELTEQQALQTPPSGPPPAVMLRSVIPAPTKGSSGKPCRVDQFRDELLLGWDGKYNTDMIHAVLEARSHHYDMFNQLYVDEVTETIKEAIQIIETVLPNE.

It belongs to the AMT4 thioesterase family.

It functions in the pathway secondary metabolite biosynthesis. Functionally, probable thioesterase; part of the gene cluster that mediates the biosynthesis of the lipopeptide antibiotics leucinostatins that show extensive biological activities, including antimalarial, antiviral, antibacterial, antifungal, and antitumor activities, as well as phytotoxic. Leucinostatin A contains nine amino acid residues, including the unusual amino acid 4-methyl-L-proline (MePro), 2-amino-6-hydroxy-4-methyl-8-oxodecanoic acid (AHyMeOA), 3-hydroxyleucine (HyLeu), alpha-aminoisobutyric acid (AIB), beta-Ala, a 4-methylhex-2-enoic acid at the N-terminus as well as a N1,N1-dimethylpropane-1,2-diamine (DPD) at the C-terminus. The biosynthesis of leucinostatins is probably initiated with the assembly of 4-methylhex-2-enoic acid by a reducing PKS. Two reducing polyketide synthases, lcsB and lcsC, have been identified in the cluster and it is not clear which is the one that assembles 4-methylhex-2-enoic acid since both contain KS, AT, DH, cMT, ER, KR and ACP domains. The polyketide residue might be transferred to the NRPS lcsA, mediated by two additional enzymes, the acyl-CoA ligase lcsD and the thioesterase lcsE. The linear polyketide carboxylic acid, which is released from PKS, is converted to a CoA thioester by lcsD, and then lcsE hydrolyzes the thiol bond and shuttles the polyketide intermediate to lcsA. The C domain of the first module catalyzed the condensation of 4-methylhex-2-enoic acid and MePro carried by domain A1, followed by successive condensations of nine amino acids to trigger the elongation of the linear peptide. A5 and A6 domains of lcsA are proposed to incorporate leucine, A2 AHyMeOA, and A3 incorporates HyLeu. A4, A7 and A8 incorporate AIB. The AHyMeOA in leucinostatin A activated by the A2 might be produced by the second PKS (lcsB or lcsC) present within the cluster. The MePro is probably produced via leucine cyclization and may originate from a separate pathway, independent of the cluster. Another nonproteinogenic amino acid, beta-Ala, could be produced by an aspartic acid decarboxylase also localized outside of the cluster. Two candidates are VFPBJ_01400 and VFPBJ_10476. The final peptide scaffold may be released by the NAD(P)H-dependent thioester reductase (TE) at the C-terminal region of lcsA. Transamination of the lcsA product by the transaminase lcsP may produce DPD at the C-terminus. Further hydroxylation steps performed alternatively by the cytochrome P450 monooxygenases lcsI, lcsK and lcsN then yield the non-methylated leucinostatins precursor. It is also possible that leucines can be hydroxylated prior to their incorporation into the peptide. Varying extents of methylation then lead to the formation of leucinostatins A and B. This Purpureocillium lilacinum (Paecilomyces lilacinus) protein is Probable thioesterase lcsE.